A 733-amino-acid chain; its full sequence is E3 ubiquitin-protein ligase COP1 (733 aa).

The disordered stretch occupies residues 1-43; that stretch reads MSGSRQAGSGSAGTSPGSSAASSVTSASSSLSSSPSPPSVAAS. Residues 111–115 carry the Nuclear localization signal 1 motif; that stretch reads SSRKR. The RING-type zinc finger occupies 138-176; that stretch reads CPICFDMIEEAYMTKCGHSFCYKCIHQSLEDNNRCPKCN. The short motif at 197 to 208 is the Nuclear localization signal 2 element; sequence KQKQRFEEKRFK. Residues 231-306 are a coiled coil; sequence DQDNLDLANV…RVEEMSGLYS (76 aa). Residues 237-247 carry the Nuclear export signal motif; the sequence is LANVNLMLELL. Residues 307-327 form a disordered region; sequence PVSEDSTVPQFEAPSPSHSSI. WD repeat units follow at residues 421–460, 470–510, 513–553, 555–595, 599–637, 640–679, and 695–731; these read NGSS…QDAV, TCNS…RSKV, EHEK…SVAS, EAKA…QPIM, GHRK…CLRS, GHIN…TLLT, and EDDT…KVLE. The interval 645–647 is interaction with TRIB1; sequence KNF.

This sequence belongs to the COP1 family. As to quaternary structure, homodimer. Homodimerization is mediated by the coiled coil domain. Component of the DCX DET1-COP1 ubiquitin ligase complex at least composed of RBX1, DET1, DDB1, CUL4A and COP1. Isoform 2 does not interact with CUL4A but still binds to RBX1, suggesting that the interaction may be mediated by another cullin protein. Isoform 1 and isoform 2 interact with CUL5 but not with CUL1, CUL2 not CUL3. Interacts with bZIP transcription factors JUN, JUNB and JUND but not with FOS, ATF2 nor XBP1. Interacts with p53 (TP53). Interacts with COPS6; this interaction stabilizes RFWD2 through reducing its auto-ubiquitination and decelerating its turnover rate. Interacts with SFN; this interaction leads to SFN degradation. Interacts with p53/TP53 and MTA1. Interacts with TRIB1 (via C-terminus) and TRIB2.

The protein resides in the nucleus speckle. It is found in the cytoplasm. It carries out the reaction S-ubiquitinyl-[E2 ubiquitin-conjugating enzyme]-L-cysteine + [acceptor protein]-L-lysine = [E2 ubiquitin-conjugating enzyme]-L-cysteine + N(6)-ubiquitinyl-[acceptor protein]-L-lysine.. It functions in the pathway protein modification; protein ubiquitination. Its activity is regulated as follows. TRIB1 competes with substrates for RFWD2 binding. Functionally, E3 ubiquitin-protein ligase that mediates ubiquitination and subsequent proteasomal degradation of target proteins. E3 ubiquitin ligases accept ubiquitin from an E2 ubiquitin-conjugating enzyme in the form of a thioester and then directly transfers the ubiquitin to targeted substrates. Involved in JUN ubiquitination and degradation. Directly involved in p53 (TP53) ubiquitination and degradation, thereby abolishing p53-dependent transcription and apoptosis. Ubiquitinates p53 independently of MDM2 or RCHY1. Probably mediates E3 ubiquitin ligase activity by functioning as the essential RING domain subunit of larger E3 complexes. In contrast, it does not constitute the catalytic RING subunit in the DCX DET1-COP1 complex that negatively regulates JUN, the ubiquitin ligase activity being mediated by RBX1. Involved in 14-3-3 protein sigma/SFN ubiquitination and proteasomal degradation, leading to AKT activation and promotion of cell survival. Ubiquitinates MTA1 leading to its proteasomal degradation. Upon binding to TRIB1, ubiquitinates CEBPA, which lacks a canonical COP1-binding motif. The polypeptide is E3 ubiquitin-protein ligase COP1 (Mus musculus (Mouse)).